The following is a 709-amino-acid chain: ATP-dependent zinc metalloprotease YME1 homolog (709 aa).

The tract at residues 152–182 (FTSDTSSTVSSTPSLNHSLQNSMPPSTPTPP) is disordered. Residues 153–165 (TSDTSSTVSSTPS) show a composition bias toward low complexity. A helical transmembrane segment spans residues 217-239 (IFKFIAGLSVASYFVLLGMSIFA). 307 to 314 (GPPGTGKT) serves as a coordination point for ATP. His-530 is a binding site for Zn(2+). Glu-531 is a catalytic residue. The Zn(2+) site is built by His-534 and Asp-608.

In the N-terminal section; belongs to the AAA ATPase family. The protein in the C-terminal section; belongs to the peptidase M41 family. Requires Zn(2+) as cofactor.

It localises to the mitochondrion membrane. Putative ATP-dependent protease. This chain is ATP-dependent zinc metalloprotease YME1 homolog, found in Schizosaccharomyces pombe (strain 972 / ATCC 24843) (Fission yeast).